A 111-amino-acid polypeptide reads, in one-letter code: Estrogen receptor (111 aa).

The interval 1–42 is disordered; the sequence is PSGYAVREAGPPAYYRPNSDNRRQGGRERLASTSDKGSMAVE. The modulating stretch occupies residues 1–49; that stretch reads PSGYAVREAGPPAYYRPNSDNRRQGGRERLASTSDKGSMAVESAKETRY. Over residues 19–30 the composition is skewed to basic and acidic residues; the sequence is SDNRRQGGRERL. Residue Ser-32 is modified to Phosphoserine. 2 NR C4-type zinc fingers span residues 50-70 and 86-110; these read CAVC…CEGC and CPAT…LRKC. A DNA-binding region (nuclear receptor) is located at residues 50–111; the sequence is CAVCNDYASG…CQACRLRKCY (62 aa).

It belongs to the nuclear hormone receptor family. NR3 subfamily. In terms of assembly, binds DNA as a homodimer. Can form a heterodimer with ESR2. Interacts with coactivator NCOA5. Interacts with PELP1, the interaction is enhanced by 17-beta-estradiol; the interaction increases ESR1 transcriptional activity. Interacts with NCOA7; the interaction is ligand-inducible. Interacts with AKAP13, CUEDC2, HEXIM1, KDM5A, MAP1S, SMARD1, and UBE1C. Interacts with MUC1; the interaction is stimulated by 7 beta-estradiol (E2) and enhances ESR1-mediated transcription. Interacts with DNTTIP2, and UIMC1. Interacts with KMT2D/MLL2. Interacts with ATAD2; the interaction is enhanced by estradiol. Interacts with KIF18A and LDB1. Interacts with RLIM (via its C-terminus). Interacts with MACROD1. Interacts with SH2D4A and PLCG. Interacts with SH2D4A; the interaction blocks binding to PLCG and inhibits estrogen-induced cell proliferation. Interacts with DYNLL1. Interacts with CCDC62; the interaction requires estradiol and appears to enhance the transcription of target genes. Interacts with NR2C1; the interaction prevents homodimerization of ESR1 and suppresses its transcriptional activity and cell growth. Interacts with DNAAF4. Interacts with PRMT2. Interacts with RBFOX2. Interacts with EP300; the interaction is estrogen-dependent and enhanced by CITED1. Interacts with CITED1; the interaction is estrogen-dependent. Interacts with FAM120B, FOXL2, PHB2 and SLC30A9. Interacts with coactivators NCOA3 and NCOA6. Interacts with STK3/MST2 only in the presence of SAV1 and vice-versa. Binds to CSNK1D. Interacts with NCOA2; NCOA2 can interact with ESR1 AF-1 and AF-2 domains simultaneously and mediate their transcriptional synergy. Interacts with DDX5. Interacts with NCOA1; the interaction seems to require a self-association of N-terminal and C-terminal regions. Interacts with ZNF366, DDX17, NFKB1, RELA, SP1 and SP3. Interacts with NRIP1. Interacts with GPER1; the interaction occurs in an estrogen-dependent manner. Interacts with CLOCK and the interaction is stimulated by estrogen. Interacts with TRIP4 (ufmylated); estrogen dependent. Interacts with LMTK3; the interaction phosphorylates ESR1 (in vitro) and protects it against proteasomal degradation. Interacts with CCAR2 (via N-terminus) in a ligand-independent manner. Interacts with ZFHX3. Interacts with SFR1 in a ligand-dependent and -independent manner. Interacts with DCAF13, LATS1 and DCAF1; regulates ESR1 ubiquitination and ubiquitin-mediated proteasomal degradation. Interacts (via DNA-binding domain) with POU4F2 (C-terminus); this interaction increases the estrogen receptor ESR1 transcriptional activity in a DNA- and ligand 17-beta-estradiol-independent manner. Interacts with ESRRB isoform 1. Interacts with UBE3A and WBP2. Interacts with GTF2B. Interacts with RBM39. In the absence of hormonal ligand, interacts with TACC1. Interacts with PI3KR1 or PI3KR2 and PTK2/FAK1. Interacts with SRC. Interacts with BAG1; the interaction is promoted in the absence of estradiol (17-beta-estradiol/E2). Interacts with and ubiquitinated by STUB1; the interaction is promoted in the absence of estradiol (17-beta-estradiol/E2). Interacts with NEDD8. In terms of processing, ubiquitinated; regulated by LATS1 via DCAF1 it leads to ESR1 proteasomal degradation. Deubiquitinated by OTUB1. Ubiquitinated by STUB1/CHIP; in the CA1 hippocampal region following loss of endogenous circulating estradiol (17-beta-estradiol/E2). Ubiquitinated by UBR5, leading to its degradation: UBR5 specifically recognizes and binds ligand-bound ESR1 when it is not associated with coactivators (NCOAs). In presence of NCOAs, the UBR5-degron is not accessible, preventing its ubiquitination and degradation. Dimethylated by PRMT1. Demethylated by JMJD6. Post-translationally, palmitoylated by ZDHHC7 and ZDHHC21. This modification is required for plasma membrane targeting and for rapid intracellular signaling via ERK and AKT kinases and cAMP generation, but not for signaling mediated by the nuclear hormone receptor. In terms of processing, phosphorylated by cyclin A/CDK2 and CK1. Phosphorylation probably enhances transcriptional activity. Dephosphorylation by PPP5C inhibits its transactivation activity. Phosphorylated by LMTK3 (in vitro).

Its subcellular location is the nucleus. The protein resides in the cytoplasm. The protein localises to the golgi apparatus. It localises to the cell membrane. Nuclear hormone receptor. The steroid hormones and their receptors are involved in the regulation of eukaryotic gene expression and affect cellular proliferation and differentiation in target tissues. Ligand-dependent nuclear transactivation involves either direct homodimer binding to a palindromic estrogen response element (ERE) sequence or association with other DNA-binding transcription factors, such as AP-1/c-Jun, c-Fos, ATF-2, Sp1 and Sp3, to mediate ERE-independent signaling. Ligand binding induces a conformational change allowing subsequent or combinatorial association with multiprotein coactivator complexes through LXXLL motifs of their respective components. Mutual transrepression occurs between the estrogen receptor (ER) and NF-kappa-B in a cell-type specific manner. Decreases NF-kappa-B DNA-binding activity and inhibits NF-kappa-B-mediated transcription from the IL6 promoter and displace RELA/p65 and associated coregulators from the promoter. Recruited to the NF-kappa-B response element of the CCL2 and IL8 promoters and can displace CREBBP. Present with NF-kappa-B components RELA/p65 and NFKB1/p50 on ERE sequences. Can also act synergistically with NF-kappa-B to activate transcription involving respective recruitment adjacent response elements; the function involves CREBBP. Can activate the transcriptional activity of TFF1. Also mediates membrane-initiated estrogen signaling involving various kinase cascades. Essential for MTA1-mediated transcriptional regulation of BRCA1 and BCAS3. Maintains neuronal survival in response to ischemic reperfusion injury when in the presence of circulating estradiol (17-beta-estradiol/E2). The protein is Estrogen receptor (ESR1) of Ovis aries (Sheep).